We begin with the raw amino-acid sequence, 237 residues long: Uracil-DNA glycosylase (237 aa).

Residue aspartate 77 is the Proton acceptor of the active site.

The protein belongs to the uracil-DNA glycosylase (UDG) superfamily. UNG family.

The protein localises to the cytoplasm. The enzyme catalyses Hydrolyzes single-stranded DNA or mismatched double-stranded DNA and polynucleotides, releasing free uracil.. Excises uracil residues from the DNA which can arise as a result of misincorporation of dUMP residues by DNA polymerase or due to deamination of cytosine. This is Uracil-DNA glycosylase from Acinetobacter baumannii (strain SDF).